The following is a 525-amino-acid chain: Vesicular inhibitory amino acid transporter (525 aa).

Residues 1 to 132 are Cytoplasmic-facing; sequence MATLLRSKLS…WNVTNAIQGM (132 aa). The disordered stretch occupies residues 69-111; that stretch reads PCGDEGAEPPVEGDIHYQRGSGAPLPPSGSKDQVGAGGEFGGH. The chain crosses the membrane as a helical span at residues 133-153; sequence FVLGLPYAILHGGYLGLFLII. Topologically, residues 154 to 204 are lumenal, vesicle; that stretch reads FAAVVCCYTGKILIACLYEENEDGEVVRVRDSYVAIANACCAPRFPTLGGR. Residue Y186 is modified to 3'-nitrotyrosine. The chain crosses the membrane as a helical span at residues 205 to 225; it reads VVNVAQIIELVMTCILYVVVS. At 226–265 the chain is on the cytoplasmic side; that stretch reads GNLMYNSFPGLPVSQKSWSIIATAVLLPCAFLKNLKAVSK. A helical transmembrane segment spans residues 266–286; sequence FSLLCTLAHFVINILVIAYCL. Residues 287–305 are Lumenal, vesicle-facing; it reads SRARDWAWEKVKFYIDVKK. The helical transmembrane segment at 306-326 threads the bilayer; that stretch reads FPISIGIIVFSYTSQIFLPSL. The Cytoplasmic segment spans residues 327-341; that stretch reads EGNMQQPSEFHCMMN. The helical transmembrane segment at 342–362 threads the bilayer; the sequence is WTHIAACVLKGLFALVAYLTW. At 363–383 the chain is on the lumenal, vesicle side; it reads ADETKEVITDNLPGSIRAVVN. Residues 384–404 form a helical membrane-spanning segment; that stretch reads IFLVAKALLSYPLPFFAAVEV. Topologically, residues 405-438 are cytoplasmic; that stretch reads LEKSLFQEGSRAFFPACYGGDGRLKSWGLTLRCA. A helical transmembrane segment spans residues 439 to 459; the sequence is LVVFTLLMAIYVPHFALLMGL. The Lumenal, vesicle portion of the chain corresponds to 460 to 461; sequence TG. The helical transmembrane segment at 462–482 threads the bilayer; sequence SLTGAGLCFLLPSLFHLRLLW. Residues 483 to 489 lie on the Cytoplasmic side of the membrane; that stretch reads RKLLWHQ. The helical transmembrane segment at 490–510 threads the bilayer; sequence VFFDVAIFVIGGICSVSGFVH. The Lumenal, vesicle portion of the chain corresponds to 511–525; that stretch reads SLEGLIEAYRTNAED.

This sequence belongs to the amino acid/polyamine transporter 2 family.

It is found in the cytoplasmic vesicle membrane. It localises to the presynapse. It carries out the reaction 4-aminobutanoate(out) + n H(+)(in) = 4-aminobutanoate(in) + n H(+)(out). The catalysed reaction is glycine(out) + n H(+)(in) = glycine(in) + n H(+)(out). It catalyses the reaction beta-alanine(out) + n H(+)(in) = beta-alanine(in) + n H(+)(out). Antiporter that exchanges vesicular protons for cytosolic 4-aminobutanoate or to a lesser extend glycine, thus allowing their secretion from nerve terminals. The transport is equally dependent on the chemical and electrical components of the proton gradient. May also transport beta-alanine. Acidification of GABAergic synaptic vesicles is a prerequisite for 4-aminobutanoate uptake. This Macaca fascicularis (Crab-eating macaque) protein is Vesicular inhibitory amino acid transporter.